The sequence spans 227 residues: Ribosomal RNA small subunit methyltransferase G (227 aa).

S-adenosyl-L-methionine-binding positions include glycine 81, leucine 86, 131–132, and arginine 149; that span reads AE.

It belongs to the methyltransferase superfamily. RNA methyltransferase RsmG family.

It localises to the cytoplasm. Its function is as follows. Specifically methylates the N7 position of guanine in position 518 of 16S rRNA. The protein is Ribosomal RNA small subunit methyltransferase G of Rhodococcus jostii (strain RHA1).